The primary structure comprises 419 residues: Serine/threonine-protein kinase Kist (419 aa).

Residues 23–304 enclose the Protein kinase domain; it reads WQVQSRLGSG…AEMALCSPFF (282 aa). Residues 29-37 and K54 each bind ATP; that span reads LGSGSSASV. Active-site proton acceptor residues include D141 and D158. An RRM domain is found at 324–406; the sequence is RLLNVLDDDY…KFVVATFYPL (83 aa).

The protein belongs to the protein kinase superfamily. Ser/Thr protein kinase family. Interacts with stathmin and CDKN1B/p27Kip1 Interacts with PAM. In the embryo, preferentially expressed in the developing nervous system.

Its subcellular location is the cytoplasm. The protein resides in the nucleus. The catalysed reaction is L-seryl-[protein] + ATP = O-phospho-L-seryl-[protein] + ADP + H(+). It carries out the reaction L-threonyl-[protein] + ATP = O-phospho-L-threonyl-[protein] + ADP + H(+). Upon serum stimulation, phosphorylates CDKN1B/p27Kip1, thus controlling CDKN1B subcellular location and cell cycle progression in G1 phase. May be involved in trafficking and/or processing of RNA. This chain is Serine/threonine-protein kinase Kist (Uhmk1), found in Rattus norvegicus (Rat).